The sequence spans 96 residues: Conantokin Rl-C (96 aa).

An N-terminal signal peptide occupies residues 1 to 21 (MQLYTYLYLLVPLVTFHLILG). Positions 22 to 78 (TGTLDHGDALTERRSADATALKPEPVLLQKSSARSTDDNGKDTQMKRIFKKRRNKAR) are excised as a propeptide. The tract at residues 36-85 (SADATALKPEPVLLQKSSARSTDDNGKDTQMKRIFKKRRNKARGEEELSE) is disordered. Positions 56–66 (STDDNGKDTQM) are enriched in basic and acidic residues. E81 is an a divalent metal cation binding site. 4-carboxyglutamate is present on residues E81, E82, E85, E89, and E93. A divalent metal cation-binding residues include E85, E89, and E93. Asparagine amide is present on N96.

It belongs to the conotoxin B superfamily. Ca(2+) is required as a cofactor. It depends on Mg(2+) as a cofactor. Expressed by the venom duct.

Its subcellular location is the secreted. Functionally, conantokins inhibit N-methyl-D-aspartate (NMDA) receptors. This toxin has antagonist activity on NR2B/GRIN2B (IC(50)=1.4 uM) and NR2A/GRIN2A (IC(50)=2.9 uM) subunits, when tested on rat receptors. The polypeptide is Conantokin Rl-C (Conus rolani (Cone snail)).